Here is a 357-residue protein sequence, read N- to C-terminus: Sorbitol dehydrogenase 2 (357 aa).

Cysteine 43 is a Zn(2+) binding site. Tyrosine 49 provides a ligand contact to substrate. Residues histidine 68 and glutamate 69 each contribute to the Zn(2+) site. Glutamate 154 provides a ligand contact to substrate. NAD(+) is bound by residues aspartate 202, lysine 207, 275 to 277, and 299 to 301; these read VGM and CFR. Positions 301 and 302 each coordinate substrate.

Belongs to the zinc-containing alcohol dehydrogenase family. In terms of assembly, homotetramer. It depends on Zn(2+) as a cofactor.

It catalyses the reaction keto-D-fructose + NADH + H(+) = D-sorbitol + NAD(+). The catalysed reaction is xylitol + NAD(+) = D-xylulose + NADH + H(+). Its function is as follows. Polyol dehydrogenase that catalyzes the reversible NAD(+)-dependent oxidation of various sugar alcohols. Is active with D-sorbitol (D-glucitol) and xylitol as substrates, leading to the C2-oxidized product D-fructose and D-xylulose, respectively. The sequence is that of Sorbitol dehydrogenase 2 (SOR2) from Saccharomyces cerevisiae (strain ATCC 204508 / S288c) (Baker's yeast).